Here is a 475-residue protein sequence, read N- to C-terminus: Ribulose bisphosphate carboxylase large chain (475 aa).

Positions 1–2 (MS) are excised as a propeptide. An N-acetylproline modification is found at Pro-3. An N6,N6,N6-trimethyllysine modification is found at Lys-14. Substrate contacts are provided by Asn-123 and Thr-173. Catalysis depends on Lys-175, which acts as the Proton acceptor. A substrate-binding site is contributed by Lys-177. Residues Lys-201, Asp-203, and Glu-204 each coordinate Mg(2+). The residue at position 201 (Lys-201) is an N6-carboxylysine. His-294 functions as the Proton acceptor in the catalytic mechanism. Arg-295, His-327, and Ser-379 together coordinate substrate.

Belongs to the RuBisCO large chain family. Type I subfamily. Heterohexadecamer of 8 large chains and 8 small chains; disulfide-linked. The disulfide link is formed within the large subunit homodimers. Mg(2+) is required as a cofactor. Post-translationally, the disulfide bond which can form in the large chain dimeric partners within the hexadecamer appears to be associated with oxidative stress and protein turnover.

The protein localises to the plastid. It localises to the chloroplast. It carries out the reaction 2 (2R)-3-phosphoglycerate + 2 H(+) = D-ribulose 1,5-bisphosphate + CO2 + H2O. The enzyme catalyses D-ribulose 1,5-bisphosphate + O2 = 2-phosphoglycolate + (2R)-3-phosphoglycerate + 2 H(+). Functionally, ruBisCO catalyzes two reactions: the carboxylation of D-ribulose 1,5-bisphosphate, the primary event in carbon dioxide fixation, as well as the oxidative fragmentation of the pentose substrate in the photorespiration process. Both reactions occur simultaneously and in competition at the same active site. The protein is Ribulose bisphosphate carboxylase large chain of Tsuga heterophylla (Western hemlock).